Consider the following 372-residue polypeptide: 4-hydroxy-3-methylbut-2-en-1-yl diphosphate synthase (flavodoxin) (372 aa).

[4Fe-4S] cluster contacts are provided by Cys270, Cys273, Cys305, and Glu312.

It belongs to the IspG family. [4Fe-4S] cluster is required as a cofactor.

The enzyme catalyses (2E)-4-hydroxy-3-methylbut-2-enyl diphosphate + oxidized [flavodoxin] + H2O + 2 H(+) = 2-C-methyl-D-erythritol 2,4-cyclic diphosphate + reduced [flavodoxin]. It participates in isoprenoid biosynthesis; isopentenyl diphosphate biosynthesis via DXP pathway; isopentenyl diphosphate from 1-deoxy-D-xylulose 5-phosphate: step 5/6. Converts 2C-methyl-D-erythritol 2,4-cyclodiphosphate (ME-2,4cPP) into 1-hydroxy-2-methyl-2-(E)-butenyl 4-diphosphate. The polypeptide is 4-hydroxy-3-methylbut-2-en-1-yl diphosphate synthase (flavodoxin) (Escherichia coli O139:H28 (strain E24377A / ETEC)).